The primary structure comprises 118 residues: MKFQPLGERVLVERLEEENKTSSGIIIPDNAKEKPLMGVVKAVSHKISEGCKCVKEGDVIAFGKYKGTEIVLDGTEYMVLELEDILGIVGSGSCCHTGNHDHKHAKEHEACCHDHKKH.

The protein belongs to the GroES chaperonin family. In terms of assembly, heptamer of 7 subunits arranged in a ring. Interacts with the chaperonin GroEL.

The protein localises to the cytoplasm. Functionally, together with the chaperonin GroEL, plays an essential role in assisting protein folding. The GroEL-GroES system forms a nano-cage that allows encapsulation of the non-native substrate proteins and provides a physical environment optimized to promote and accelerate protein folding. GroES binds to the apical surface of the GroEL ring, thereby capping the opening of the GroEL channel. The polypeptide is Co-chaperonin GroES (Helicobacter pylori (strain P12)).